The following is a 265-amino-acid chain: Undecaprenyl-diphosphatase 1 (265 aa).

7 consecutive transmembrane segments (helical) span residues I4 to S24, A42 to H62, F84 to I104, L108 to A128, S184 to L204, M217 to L237, and L245 to L265.

It belongs to the UppP family.

The protein localises to the cell membrane. The catalysed reaction is di-trans,octa-cis-undecaprenyl diphosphate + H2O = di-trans,octa-cis-undecaprenyl phosphate + phosphate + H(+). Its function is as follows. Catalyzes the dephosphorylation of undecaprenyl diphosphate (UPP). Confers resistance to bacitracin. The sequence is that of Undecaprenyl-diphosphatase 1 from Bacillus thuringiensis (strain Al Hakam).